The primary structure comprises 103 residues: Hexon-interlacing protein (103 aa).

Residues 25–45 (RQNVTGSDLGGKPVPSDVLES) are disordered. Residues 72–99 (LDDLKTQVAAMQNSVTAIQEELKDLKQR) adopt a coiled-coil conformation.

This sequence belongs to the adenoviridae hexon-interlacing protein family. In terms of assembly, homotrimer. Interacts with hexon protein; this interaction tethers the hexons together. Self-interacts with adjacent proteins. Interacts with kinesin light chain KLC1; this interaction leads to capsid disruption at the nuclear pore complex during virus entry into host cell.

It is found in the virion. Its subcellular location is the host nucleus. Structural component of the virion that acts as a cement protein on the capsid exterior and forms triskelion structures consisting of three molecules that stabilize three hexon trimers at the center of each icosahedral facet and fixes the peripentonal hexons. Dispensable for assembly. During virus entry, recruits the anterograde motor kinesin-1 to the capsid docked at the nuclear pore complex thereby subjecting the docked capsid to a pulling force. The resulting tension leads to capsid disruption, dispersion of capsid fragments toward cell periphery and eventually viral DNA entry into the host nucleus. The chain is Hexon-interlacing protein from Canine adenovirus serotype 1 (strain CLL) (CAdV-1).